Reading from the N-terminus, the 407-residue chain is Phosphopentomutase (407 aa).

Asp-10, Asp-306, His-311, Asp-347, His-348, and His-359 together coordinate Mn(2+).

It belongs to the phosphopentomutase family. Requires Mn(2+) as cofactor.

The protein resides in the cytoplasm. The catalysed reaction is 2-deoxy-alpha-D-ribose 1-phosphate = 2-deoxy-D-ribose 5-phosphate. It catalyses the reaction alpha-D-ribose 1-phosphate = D-ribose 5-phosphate. Its pathway is carbohydrate degradation; 2-deoxy-D-ribose 1-phosphate degradation; D-glyceraldehyde 3-phosphate and acetaldehyde from 2-deoxy-alpha-D-ribose 1-phosphate: step 1/2. Its function is as follows. Isomerase that catalyzes the conversion of deoxy-ribose 1-phosphate (dRib-1-P) and ribose 1-phosphate (Rib-1-P) to deoxy-ribose 5-phosphate (dRib-5-P) and ribose 5-phosphate (Rib-5-P), respectively. This is Phosphopentomutase from Salmonella paratyphi A (strain AKU_12601).